Reading from the N-terminus, the 68-residue chain is Conotoxin Lt5.11 (68 aa).

An N-terminal signal peptide occupies residues 1 to 19 (MLCLPVFIILLLLASPAAP). Residues 20 to 54 (KSLETRIQNDLIRAGLTDADLKTEKGFLSGLLNVA) constitute a propeptide that is removed on maturation.

The protein belongs to the conotoxin T superfamily. In terms of processing, contains 2 disulfide bonds that can be either 'C1-C3, C2-C4' or 'C1-C4, C2-C3', since these disulfide connectivities have been observed for conotoxins with cysteine framework V (for examples, see AC P0DQQ7 and AC P81755). Expressed by the venom duct.

The protein resides in the secreted. This chain is Conotoxin Lt5.11, found in Conus litteratus (Lettered cone).